The sequence spans 977 residues: Short transient receptor potential channel 4 (977 aa).

Residues 1–324 lie on the Cytoplasmic side of the membrane; sequence MAQFYYKRNV…YDEFPGWRRR (324 aa). ANK repeat units lie at residues 29–60, 71–93, 96–118, and 141–165; these read LSPS…IYFK, RTAL…LSFN, VGDA…LLNH, and PDIT…VQKG. The Zn(2+) site is built by His172, Cys176, Cys178, and Cys181. A coiled-coil region spans residues 223–260; it reads LSWELQELSKVENEFKSEYEELSRQCKQFAKDLLDQTR. The segment at residues 325–359 is an intramembrane region (discontinuously helical); that stretch reads HWAVKMVTCFIIGLLFPVFSVCYLIAPKSPLGLFI. Over 360-362 the chain is Cytoplasmic; that stretch reads RKP. The chain crosses the membrane as a helical span at residues 363-383; it reads FIKFICHTASYLTFLFLLLLA. Residues 384 to 403 are Extracellular-facing; sequence SQHIDRSDLNRQGPPPTIVE. A helical transmembrane segment spans residues 404 to 418; that stretch reads WMILPWVLGFIWGEI. 4 residues coordinate Ca(2+): Glu417, Gln420, Asn435, and Asp438. Over 419–432 the chain is Cytoplasmic; that stretch reads KQMWDGGLQDYIHD. Residues 433–453 traverse the membrane as a helical segment; that stretch reads WWNLMDFVMNSLYLATISLKI. Over 454–475 the chain is Extracellular; that stretch reads VAFVKYSALNPRESWDMWHPTL. Residues 476-498 traverse the membrane as a helical segment; sequence VAEALFAIANIFSSLRLISLFTA. Topologically, residues 499 to 511 are cytoplasmic; that stretch reads NSHLGPLQISLGR. A helical transmembrane segment spans residues 512–534; the sequence is MLLDILKFLFIYCLVLLAFANGL. The Extracellular segment spans residues 535–599; that stretch reads NQLYFYYEET…HEFTEFVGAT (65 aa). Cys549 and Cys554 form a disulfide bridge. Residues 600 to 620 form a helical membrane-spanning segment; the sequence is MFGTYNVISLVVLLNMLIAMM. Positions 615-977 are interaction with ITPR1, ITPR2 and ITPR3; that stretch reads MLIAMMNNSY…THEDYVTTRL (363 aa). The Cytoplasmic segment spans residues 621–977; sequence NNSYQLIADH…THEDYVTTRL (357 aa). The tract at residues 762 to 790 is disordered; that stretch reads IQSANASKESSNSADSDEKSDSEGNSKDK. Low complexity predominate over residues 764-775; sequence SANASKESSNSA. Residues 777–788 show a composition bias toward basic and acidic residues; that stretch reads SDEKSDSEGNSK. Tyr959 and Tyr972 each carry phosphotyrosine; by FYN. Residues 975-977 are PDZ-binding domain; it reads TRL.

It belongs to the transient receptor (TC 1.A.4) family. STrpC subfamily. TRPC4 sub-subfamily. In terms of assembly, homotetramer. Heterotetramer with TRPC1 and/or TRPC5. Forms a heteromeric ion channel with TRPC1, with a 1:3 TRPC1:TRPC4 stoichiometry. Interacts with TRPC4AP. Isoform alpha but not isoform beta interacts with ITPR1, ITPR2 and ITPR3. Interacts with (via PDZ-binding domain) with NHERF1. Interacts with MX1 and RNF24. Interacts (via CIRB domain) with SESTD1 (via spectrin 1 repeat). Interacts with CDH5 and CTNNB1. Interacts with SPTAN1 (via C-terminal spectrin repeats) and SPTBN5 (via C-terminus). Interacts (via protein 4.1-binding domain) with EPB41L2. Interacts with PLSCR1. Post-translationally, phosphorylation modulates TRPC channel function by regulating the level of TRPC4 at the cell surface and by increasing the association with NHERF1. As to expression, strongly expressed in placenta. Expressed at lower levels in heart, pancreas, kidney and brain. Expressed in endothelial cells. Isoform alpha was found to be the predominant isoform. Isoform beta was not found in pancreas and brain.

It is found in the cell membrane. The catalysed reaction is Ca(2+)(in) = Ca(2+)(out). The enzyme catalyses Na(+)(in) = Na(+)(out). It carries out the reaction Li(+)(in) = Li(+)(out). It catalyses the reaction Cs(+)(in) = Cs(+)(out). With respect to regulation, may be operated by a phosphatidylinositol second messenger system activated by receptor tyrosine kinases or G-protein coupled receptors. May be activated by intracellular calcium store depletion. Inhibited by xanthine-based inhibitor Pico145. In terms of biological role, forms a receptor-activated non-selective calcium permeant cation channel. Acts as a cell-cell contact-dependent endothelial calcium entry channel. Forms a homomeric ion channel or a heteromeric ion channel with TRPC1; the heteromeric ion channel has reduced calcium permeability compared to the homomeric channel. Also permeable to monovalent ions including sodium, lithium and cesium ions. Forms a receptor-activated non-selective calcium permeant cation channel. The polypeptide is Short transient receptor potential channel 4 (TRPC4) (Homo sapiens (Human)).